The sequence spans 491 residues: Cytochrome P450 2F3 (491 aa).

A heme-binding site is contributed by Cys436.

This sequence belongs to the cytochrome P450 family. Requires heme as cofactor. Lung specific.

The protein localises to the endoplasmic reticulum membrane. It localises to the microsome membrane. The catalysed reaction is an organic molecule + reduced [NADPH--hemoprotein reductase] + O2 = an alcohol + oxidized [NADPH--hemoprotein reductase] + H2O + H(+). Bioactivates 3-methylindole (3MI) by dehydrogenation to the putative electrophile 3-methylene-indolenine. Stereoselectively catalyzes the formation of the 1R,2S-oxide from naphthalene. Lack activity with other common P450 substrates including 7-ethoxycoumarin. This chain is Cytochrome P450 2F3 (CYP2F3), found in Capra hircus (Goat).